Consider the following 488-residue polypeptide: Glutamyl-tRNA(Gln) amidotransferase subunit A (488 aa).

Residues Lys77 and Ser152 each act as charge relay system in the active site. Ser176 functions as the Acyl-ester intermediate in the catalytic mechanism.

This sequence belongs to the amidase family. GatA subfamily. As to quaternary structure, heterotrimer of A, B and C subunits.

The enzyme catalyses L-glutamyl-tRNA(Gln) + L-glutamine + ATP + H2O = L-glutaminyl-tRNA(Gln) + L-glutamate + ADP + phosphate + H(+). In terms of biological role, allows the formation of correctly charged Gln-tRNA(Gln) through the transamidation of misacylated Glu-tRNA(Gln) in organisms which lack glutaminyl-tRNA synthetase. The reaction takes place in the presence of glutamine and ATP through an activated gamma-phospho-Glu-tRNA(Gln). The sequence is that of Glutamyl-tRNA(Gln) amidotransferase subunit A from Streptococcus thermophilus (strain CNRZ 1066).